The sequence spans 103 residues: Histone H4 (103 aa).

The span at 1–14 (MSGRGKGGKGLGKG) shows a compositional bias: gly residues. The segment at 1–20 (MSGRGKGGKGLGKGGAKRHR) is disordered. N-acetylserine is present on serine 2. Residues lysine 6 and lysine 13 each carry the N6-acetyl-N6-methyllysine; alternate modification. Position 17 is an N6-acetyllysine (lysine 17). Residues 17 to 21 (KRHRK) mediate DNA binding. Lysine 21 carries the post-translational modification N6-methyllysine.

This sequence belongs to the histone H4 family. As to quaternary structure, the nucleosome is a histone octamer containing two molecules each of H2A, H2B, H3 and H4 assembled in one H3-H4 heterotetramer and two H2A-H2B heterodimers. The octamer wraps approximately 147 bp of DNA.

The protein resides in the nucleus. The protein localises to the chromosome. Its function is as follows. Core component of nucleosome. Nucleosomes wrap and compact DNA into chromatin, limiting DNA accessibility to the cellular machineries which require DNA as a template. Histones thereby play a central role in transcription regulation, DNA repair, DNA replication and chromosomal stability. DNA accessibility is regulated via a complex set of post-translational modifications of histones, also called histone code, and nucleosome remodeling. This chain is Histone H4, found in Ascaris suum (Pig roundworm).